We begin with the raw amino-acid sequence, 692 residues long: Elongation factor G (692 aa).

The tr-type G domain maps to 8 to 282 (EKVRNIGIAA…AVVDYLPAPS (275 aa)). GTP-binding positions include 17-24 (AHIDAGKT), 81-85 (DTPGH), and 135-138 (NKMD).

It belongs to the TRAFAC class translation factor GTPase superfamily. Classic translation factor GTPase family. EF-G/EF-2 subfamily.

The protein resides in the cytoplasm. Its function is as follows. Catalyzes the GTP-dependent ribosomal translocation step during translation elongation. During this step, the ribosome changes from the pre-translocational (PRE) to the post-translocational (POST) state as the newly formed A-site-bound peptidyl-tRNA and P-site-bound deacylated tRNA move to the P and E sites, respectively. Catalyzes the coordinated movement of the two tRNA molecules, the mRNA and conformational changes in the ribosome. This chain is Elongation factor G, found in Nostoc punctiforme (strain ATCC 29133 / PCC 73102).